Consider the following 517-residue polypeptide: Putative pumilio homolog 21 (517 aa).

Disordered stretches follow at residues 33–57 (NHQE…PPLL), 69–94 (KNNQ…PPLV), 107–130 (NHQE…PLLT), and 175–201 (FTPS…PPLS). A compositionally biased stretch (low complexity) spans 42–51 (NTNINSNNNH). Polar residues predominate over residues 69–84 (KNNQEPGESGNTTINR). One can recognise a PUM-HD domain in the interval 148-502 (ESSNNNYPNL…NTLRVIQEEI (355 aa)). Polar residues predominate over residues 177–190 (PSSLTQPDDSSSRY). The Pumilio 1; degenerate repeat unit spans residues 258–293 (TTKRIFLHLATNQYGSQALRILFRRSPSLDHLLFCA). The Pumilio 2 repeat unit spans residues 294–328 (VDTNFFLLMSDKYGRGLIIPAIRAVDKTKKESLYK). The Pumilio 3; degenerate repeat unit spans residues 329–363 (LTYEYTLHLARLETGCLALNNVLQEIRGIYRDLIF). Pumilio repeat units follow at residues 364 to 400 (ECVA…AIAE), 401 to 437 (RLRG…EEFR), and 438 to 473 (GNAK…PLLR).

The protein localises to the cytoplasm. In terms of biological role, sequence-specific RNA-binding protein that regulates translation and mRNA stability by binding the 3'-UTR of target mRNAs. The sequence is that of Putative pumilio homolog 21 (APUM21) from Arabidopsis thaliana (Mouse-ear cress).